A 146-amino-acid chain; its full sequence is Large ribosomal subunit protein uL13 (146 aa).

It belongs to the universal ribosomal protein uL13 family. Part of the 50S ribosomal subunit.

Its function is as follows. This protein is one of the early assembly proteins of the 50S ribosomal subunit, although it is not seen to bind rRNA by itself. It is important during the early stages of 50S assembly. The polypeptide is Large ribosomal subunit protein uL13 (Mycoplasma genitalium (strain ATCC 33530 / DSM 19775 / NCTC 10195 / G37) (Mycoplasmoides genitalium)).